The sequence spans 318 residues: Cyclic AMP receptor-like protein F (318 aa).

Over 1-3 the chain is Extracellular; the sequence is MKD. Residues 4–24 traverse the membrane as a helical segment; sequence IILIYMICAPISMIGSLFIII. At 25–38 the chain is on the cytoplasmic side; it reads TWLLYAKLKNSGSN. The helical transmembrane segment at 39–59 threads the bilayer; sequence FIFFQAISDFFFTSKYIITII. The Extracellular segment spans residues 60–83; it reads FYYINIPQFSDETSSTDTNPYCFS. A disulfide bond links C81 and C177. Residues 84–104 form a helical membrane-spanning segment; the sequence is LGLFSQFFGQATIMWSYTMTV. Residues 105 to 145 lie on the Cytoplasmic side of the membrane; that stretch reads KVFHSYFEMKKKNNNNNIGSNNIGGGGGGNNSNKQNSIDKT. A helical membrane pass occupies residues 146–166; that stretch reads LKWYHLFVWGFCLVNATIIGI. At 167-187 the chain is on the extracellular side; that stretch reads SKQYGPSSTGCWIVGANNPYR. A helical transmembrane segment spans residues 188 to 208; it reads FFELVPLYFTITTSIIILILI. Over 209–234 the chain is Cytoplasmic; that stretch reads LVKMKKSKPSSLLPTESMRYNQQARE. Residues 235 to 255 traverse the membrane as a helical segment; sequence FKIQLMKFVLIFIIFWLPATV. The Extracellular segment spans residues 256–267; sequence LRTLEYFGIEKT. A helical membrane pass occupies residues 268-288; that stretch reads FFILLDAVSVSLQALANSLVW. Residues 289-318 are Cytoplasmic-facing; that stretch reads ATSPQFLKLMKRKVVNKPNKQMEREYLINK.

Belongs to the G-protein coupled receptor 5 family.

It is found in the membrane. Its function is as follows. Receptor for cAMP. The chain is Cyclic AMP receptor-like protein F (crlF) from Dictyostelium discoideum (Social amoeba).